The chain runs to 374 residues: Alcohol dehydrogenase class-3 (374 aa).

Ala-2 bears the N-acetylalanine mark. Zn(2+) contacts are provided by Cys-45, His-67, Cys-97, Cys-100, Cys-103, Cys-111, and Cys-174. Position 233 is an N6-succinyllysine (Lys-233). Residue Ser-247 is modified to Phosphoserine. Lys-315 bears the N6-succinyllysine mark. Phosphoserine occurs at positions 324 and 351.

Belongs to the zinc-containing alcohol dehydrogenase family. Class-III subfamily. In terms of assembly, homodimer. Zn(2+) is required as a cofactor.

The protein localises to the cytoplasm. The catalysed reaction is a primary alcohol + NAD(+) = an aldehyde + NADH + H(+). It catalyses the reaction a secondary alcohol + NAD(+) = a ketone + NADH + H(+). The enzyme catalyses S-(hydroxymethyl)glutathione + NADP(+) = S-formylglutathione + NADPH + H(+). It carries out the reaction S-(hydroxymethyl)glutathione + NAD(+) = S-formylglutathione + NADH + H(+). The catalysed reaction is 20-oxo-(5Z,8Z,11Z,14Z)-eicosatetraenoate + NAD(+) + H2O = (5Z,8Z,11Z,14Z)-eicosatetraenedioate + NADH + 2 H(+). It catalyses the reaction 20-hydroxy-(5Z,8Z,11Z,14Z)-eicosatetraenoate + NAD(+) = 20-oxo-(5Z,8Z,11Z,14Z)-eicosatetraenoate + NADH + H(+). The enzyme catalyses S-nitrosoglutathione + NADH + H(+) = S-(hydroxysulfenamide)glutathione + NAD(+). Functionally, catalyzes the oxidation of long-chain primary alcohols and the oxidation of S-(hydroxymethyl) glutathione. Also oxidizes long chain omega-hydroxy fatty acids, such as 20-HETE, producing both the intermediate aldehyde, 20-oxoarachidonate and the end product, a dicarboxylic acid, (5Z,8Z,11Z,14Z)-eicosatetraenedioate. Class-III ADH is remarkably ineffective in oxidizing ethanol. Required for clearance of cellular formaldehyde, a cytotoxic and carcinogenic metabolite that induces DNA damage. Also acts as a S-nitroso-glutathione reductase by catalyzing the NADH-dependent reduction of S-nitrosoglutathione, thereby regulating protein S-nitrosylation. The protein is Alcohol dehydrogenase class-3 of Oryctolagus cuniculus (Rabbit).